Consider the following 622-residue polypeptide: Palmitoyl-protein thioesterase-dolichyl pyrophosphate phosphatase fusion 1 (622 aa).

An N-terminal signal peptide occupies residues 1-24; the sequence is MLSCSSFLIFFLFSWVLLPMKSFA. Residues 25 to 405 are Lumenal-facing; it reads IPIISLDKVR…NVSEEKGPKS (381 aa). C106 and C138 are oxidised to a cystine. S125 is an active-site residue. A glycan (N-linked (GlcNAc...) asparagine) is linked at N223. D245 is an active-site residue. N-linked (GlcNAc...) asparagine glycosylation is present at N260. Residue H298 is part of the active site. An N-linked (GlcNAc...) asparagine glycan is attached at N396. The chain crosses the membrane as a helical span at residues 406 to 426; it reads FANLAFITIFSHFFYHIDDMW. Over 427-428 the chain is Cytoplasmic; it reads RS. A helical membrane pass occupies residues 429–449; that stretch reads TLGLFSLIPQIIGIIYLTVMF. Over 450–488 the chain is Lumenal; it reads TGRELDTFMQFGGQVVNEFINYVVKVSLKYPRPADIEYG. The chain crosses the membrane as a helical span at residues 489-511; it reads VGYGMPSSHSQFMGFFSAYMIAW. Topologically, residues 512 to 519 are cytoplasmic; that stretch reads DYKYRRSQ. Residues 520 to 540 traverse the membrane as a helical segment; the sequence is CFSMLSFAKYAIYLTLSTFVC. Residues 541 to 552 are Lumenal-facing; the sequence is SSRYLLDFHYLT. Residues 553 to 573 form a helical membrane-spanning segment; it reads QVVYGYMIGFGVGLFWVYLVG. Over 574–622 the chain is Cytoplasmic; that stretch reads KLRSLGVTKWLLSLPPLQFFYIKDTIPHSKDNHKRQWLESKQFKNQKSN.

It in the N-terminal section; belongs to the palmitoyl-protein thioesterase family. This sequence in the C-terminal section; belongs to the dolichyldiphosphatase family. In terms of processing, proteolytically cleaved, possibly by krp1.

It localises to the vacuole. It is found in the endoplasmic reticulum membrane. The catalysed reaction is S-hexadecanoyl-L-cysteinyl-[protein] + H2O = L-cysteinyl-[protein] + hexadecanoate + H(+). It catalyses the reaction a di-trans,poly-cis-dolichyl diphosphate + H2O = a di-trans,poly-cis-dolichyl phosphate + phosphate + H(+). Essential protein. Removes thioester-linked fatty acyl groups such as palmitate from modified cysteine residues in proteins or peptides during vacuolar degradation. Required for efficient N-glycosylation. Necessary for maintaining optimal levels of dolichol-linked oligosaccharides. This chain is Palmitoyl-protein thioesterase-dolichyl pyrophosphate phosphatase fusion 1 (pdf1), found in Schizosaccharomyces pombe (strain 972 / ATCC 24843) (Fission yeast).